The following is a 218-amino-acid chain: Ribonuclease HII (218 aa).

Positions 12–206 (GRVAGVDEVG…VREALARSAL (195 aa)) constitute an RNase H type-2 domain. Residues D18, E19, and D115 each coordinate a divalent metal cation.

Belongs to the RNase HII family. Mn(2+) serves as cofactor. It depends on Mg(2+) as a cofactor.

Its subcellular location is the cytoplasm. It carries out the reaction Endonucleolytic cleavage to 5'-phosphomonoester.. In terms of biological role, endonuclease that specifically degrades the RNA of RNA-DNA hybrids. The polypeptide is Ribonuclease HII (Rhodospirillum rubrum (strain ATCC 11170 / ATH 1.1.1 / DSM 467 / LMG 4362 / NCIMB 8255 / S1)).